Consider the following 309-residue polypeptide: Cytochrome c biogenesis protein CcsA (309 aa).

Transmembrane regions (helical) follow at residues 18 to 38 (LGLLVFYFLLINLPISLGAVF), 43 to 63 (SFAVRLITILVNLLITLQLLF), 73 to 93 (ISNLYESLYFLAWGITLGQLL), 102 to 122 (IIPSIAIPIELLIVSFACFVL), 148 to 168 (VMLSYAALIIGSLLSMSVLFI), 216 to 236 (SILIGFVLLTLGLISGAVWAN), 250 to 267 (TWAFISWLFYAAYLHMRI), and 279 to 299 (LASTGFLVVLVCYLGVNFLGI).

It belongs to the CcmF/CycK/Ccl1/NrfE/CcsA family. In terms of assembly, may interact with ccs1.

The protein resides in the cellular thylakoid membrane. Required during biogenesis of c-type cytochromes (cytochrome c6 and cytochrome f) at the step of heme attachment. The sequence is that of Cytochrome c biogenesis protein CcsA from Prochlorococcus marinus (strain MIT 9301).